Here is a 353-residue protein sequence, read N- to C-terminus: MEVSREMLFEELDNYSYALEYYSQEPDAEENVYPGIVHWISLLLYALAFVLGIPGNAIVIWFMGFKWKKTVTTLWFLNLAIADFVFVLFLPLYISYVALSFHWPFGRWLCKLNSFIAQLNMFSSVFFLTVISLDRYIHLIHPGLSHPHRTLKNSLLVVLFVWLLASLLGGPTLYFRDTVEVNNRIICYNNFQEYELTLMRHHVLTWVKFLFGYLLPLLTMSSCYLCLIFKTKKQNILISSKHLWMILSVVIAFMVCWTPFHLFSIWELSIHHNSSFQNVLQGGIPLSTGLAFLNSCLNPILYVLISKKFQARFRASVAEVLKRSLWEASCSGTVSEQLRSAETKSLSLLETAQ.

Residues 1–41 are Extracellular-facing; that stretch reads MEVSREMLFEELDNYSYALEYYSQEPDAEENVYPGIVHWIS. Asn-14 carries an N-linked (GlcNAc...) asparagine glycan. A helical transmembrane segment spans residues 42–62; sequence LLLYALAFVLGIPGNAIVIWF. Residues 63-73 are Cytoplasmic-facing; it reads MGFKWKKTVTT. Residues 74-94 traverse the membrane as a helical segment; it reads LWFLNLAIADFVFVLFLPLYI. At 95 to 112 the chain is on the extracellular side; the sequence is SYVALSFHWPFGRWLCKL. A disulfide bridge links Cys-110 with Cys-187. Residues 113–133 traverse the membrane as a helical segment; that stretch reads NSFIAQLNMFSSVFFLTVISL. The Cytoplasmic segment spans residues 134-154; sequence DRYIHLIHPGLSHPHRTLKNS. The helical transmembrane segment at 155–175 threads the bilayer; it reads LLVVLFVWLLASLLGGPTLYF. Residues 176-210 lie on the Extracellular side of the membrane; that stretch reads RDTVEVNNRIICYNNFQEYELTLMRHHVLTWVKFL. The helical transmembrane segment at 211–231 threads the bilayer; the sequence is FGYLLPLLTMSSCYLCLIFKT. The Cytoplasmic segment spans residues 232 to 247; the sequence is KKQNILISSKHLWMIL. The helical transmembrane segment at 248 to 268 threads the bilayer; that stretch reads SVVIAFMVCWTPFHLFSIWEL. Residues 269 to 286 lie on the Extracellular side of the membrane; the sequence is SIHHNSSFQNVLQGGIPL. The helical transmembrane segment at 287-307 threads the bilayer; that stretch reads STGLAFLNSCLNPILYVLISK. Residues 308 to 353 are Cytoplasmic-facing; that stretch reads KFQARFRASVAEVLKRSLWEASCSGTVSEQLRSAETKSLSLLETAQ.

The protein belongs to the chemokine-like receptor (CMKLR) family.

It localises to the cell membrane. In terms of biological role, receptor for chemoattractant adipokine chemerin/RARRES2 suggesting a role for this receptor in the regulation of inflammation and energy homesotasis. Signals mainly via beta-arrestin pathway. Binding of RARRES2 activates weakly G proteins, calcium mobilization and MAPK1/MAPK3 (ERK1/2) phosphorylation too. Acts also as a receptor for TAFA1, mediates its effects on neuronal stem-cell proliferation and differentiation via the activation of ROCK/ERK and ROCK/STAT3 signaling pathway. This chain is Chemerin-like receptor 2 (Cmklr2), found in Rattus norvegicus (Rat).